A 542-amino-acid polypeptide reads, in one-letter code: Chaperonin GroEL (542 aa).

ATP is bound by residues 29 to 32 (TLGP), 86 to 90 (DGTTT), G413, 478 to 480 (DAL), and D494.

This sequence belongs to the chaperonin (HSP60) family. As to quaternary structure, forms a cylinder of 14 subunits composed of two heptameric rings stacked back-to-back. Interacts with the co-chaperonin GroES.

It localises to the cytoplasm. It carries out the reaction ATP + H2O + a folded polypeptide = ADP + phosphate + an unfolded polypeptide.. Together with its co-chaperonin GroES, plays an essential role in assisting protein folding. The GroEL-GroES system forms a nano-cage that allows encapsulation of the non-native substrate proteins and provides a physical environment optimized to promote and accelerate protein folding. The chain is Chaperonin GroEL from Clostridioides difficile (strain 630) (Peptoclostridium difficile).